We begin with the raw amino-acid sequence, 439 residues long: Proline--tRNA ligase (439 aa).

This sequence belongs to the class-II aminoacyl-tRNA synthetase family. ProS type 2 subfamily. In terms of assembly, homodimer.

The protein localises to the cytoplasm. It catalyses the reaction tRNA(Pro) + L-proline + ATP = L-prolyl-tRNA(Pro) + AMP + diphosphate. Functionally, catalyzes the attachment of proline to tRNA(Pro) in a two-step reaction: proline is first activated by ATP to form Pro-AMP and then transferred to the acceptor end of tRNA(Pro). The polypeptide is Proline--tRNA ligase (Hyphomonas neptunium (strain ATCC 15444)).